We begin with the raw amino-acid sequence, 125 residues long: Phosphoribosyl-AMP cyclohydrolase (125 aa).

Asp-74 is a binding site for Mg(2+). Cys-75 contacts Zn(2+). Asp-76 and Asp-78 together coordinate Mg(2+). Cys-92 and Cys-99 together coordinate Zn(2+).

It belongs to the PRA-CH family. In terms of assembly, homodimer. Mg(2+) serves as cofactor. It depends on Zn(2+) as a cofactor.

Its subcellular location is the cytoplasm. The catalysed reaction is 1-(5-phospho-beta-D-ribosyl)-5'-AMP + H2O = 1-(5-phospho-beta-D-ribosyl)-5-[(5-phospho-beta-D-ribosylamino)methylideneamino]imidazole-4-carboxamide. Its pathway is amino-acid biosynthesis; L-histidine biosynthesis; L-histidine from 5-phospho-alpha-D-ribose 1-diphosphate: step 3/9. Catalyzes the hydrolysis of the adenine ring of phosphoribosyl-AMP. The polypeptide is Phosphoribosyl-AMP cyclohydrolase (Geotalea uraniireducens (strain Rf4) (Geobacter uraniireducens)).